A 116-amino-acid polypeptide reads, in one-letter code: Large ribosomal subunit protein bL20 (116 aa).

Belongs to the bacterial ribosomal protein bL20 family.

Binds directly to 23S ribosomal RNA and is necessary for the in vitro assembly process of the 50S ribosomal subunit. It is not involved in the protein synthesizing functions of that subunit. This chain is Large ribosomal subunit protein bL20 (rplT), found in Helicobacter pylori (strain ATCC 700392 / 26695) (Campylobacter pylori).